Here is a 294-residue protein sequence, read N- to C-terminus: Methionine aminopeptidase (294 aa).

His-65 contacts substrate. Asp-85, Asp-96, and His-156 together coordinate a divalent metal cation. A substrate-binding site is contributed by His-164. A divalent metal cation contacts are provided by Glu-189 and Glu-279.

It belongs to the peptidase M24A family. Methionine aminopeptidase archaeal type 2 subfamily. Monomer. Requires Co(2+) as cofactor. Zn(2+) is required as a cofactor. Mn(2+) serves as cofactor. It depends on Fe(2+) as a cofactor.

The enzyme catalyses Release of N-terminal amino acids, preferentially methionine, from peptides and arylamides.. Its function is as follows. Removes the N-terminal methionine from nascent proteins. The N-terminal methionine is often cleaved when the second residue in the primary sequence is small and uncharged (Met-Ala-, Cys, Gly, Pro, Ser, Thr, or Val). This Methanocaldococcus jannaschii (strain ATCC 43067 / DSM 2661 / JAL-1 / JCM 10045 / NBRC 100440) (Methanococcus jannaschii) protein is Methionine aminopeptidase.